A 729-amino-acid polypeptide reads, in one-letter code: Sodium-dependent neutral amino acid transporter B(0)AT2 (729 aa).

The Cytoplasmic segment spans residues 1-69 (MPKNSKVVKR…ARPAWNSKLQ (69 aa)). Phosphoserine is present on residues Ser25 and Ser55. 3 helical membrane passes run 70–90 (YILAQVGFSVGLGNVWRFPYL), 98–117 (AYLLPYLILLLVIGIPLFFL), and 142–162 (GIGFASCVVCFFVALYYNVII). Over 163 to 225 (GWSLFYFSQS…TSISESGGLN (63 aa)) the chain is Extracellular. N-linked (GlcNAc...) asparagine glycosylation is found at Asn187 and Asn213. 4 helical membrane passes run 226-244 (WKMTICLLAAWVVVCLAMI), 253-270 (IMYFSSLFPYVVLICFLI), 306-323 (VFFALGLGFGGVIAFSSY), and 335-356 (VLVSFINFFTSILATLVVFAVL). The Extracellular portion of the chain corresponds to 357 to 452 (GFKANVINEK…FIAFTEAMTH (96 aa)). 2 N-linked (GlcNAc...) asparagine glycosylation sites follow: Asn383 and Asn394. Transmembrane regions (helical) follow at residues 453–472 (FPASPFWSVMFFLMLVNLGL), 496–514 (ILTVICCLLAFCIGLIFVQ), 530–550 (TLPLLIVVILENIAVSFVYGI), 571–592 (YMWKYISPLMLLSLLIASIVNM), and 620–642 (VICISLMVLAILPIPVVFIIRRC). Residues 643–729 (NLIDDSSGNL…DMPDMPESDL (87 aa)) lie on the Cytoplasmic side of the membrane. Phosphoserine occurs at positions 687, 699, and 701.

This sequence belongs to the sodium:neurotransmitter symporter (SNF) (TC 2.A.22) family. SLC6A15 subfamily.

It localises to the membrane. It catalyses the reaction L-leucine(in) + Na(+)(in) = L-leucine(out) + Na(+)(out). The catalysed reaction is L-isoleucine(in) + Na(+)(in) = L-isoleucine(out) + Na(+)(out). It carries out the reaction L-methionine(in) + Na(+)(in) = L-methionine(out) + Na(+)(out). The enzyme catalyses L-proline(in) + Na(+)(in) = L-proline(out) + Na(+)(out). It catalyses the reaction L-alanine(in) + Na(+)(in) = L-alanine(out) + Na(+)(out). The catalysed reaction is L-asparagine(in) + Na(+)(in) = L-asparagine(out) + Na(+)(out). It carries out the reaction L-valine(in) + Na(+)(in) = L-valine(out) + Na(+)(out). The enzyme catalyses L-cysteine(in) + Na(+)(in) = L-cysteine(out) + Na(+)(out). It catalyses the reaction L-glutamine(in) + Na(+)(in) = L-glutamine(out) + Na(+)(out). The catalysed reaction is L-serine(in) + Na(+)(in) = L-serine(out) + Na(+)(out). It carries out the reaction L-threonine(in) + Na(+)(in) = L-threonine(out) + Na(+)(out). The enzyme catalyses L-pipecolate(in) + Na(+)(in) = L-pipecolate(out) + Na(+)(out). It catalyses the reaction L-phenylalanine(in) + Na(+)(in) = L-phenylalanine(out) + Na(+)(out). In terms of biological role, functions as a sodium-dependent neutral amino acid transporter. Exhibits preference for the branched-chain amino acids, particularly leucine, valine and isoleucine and methionine. Can also transport low-affinity substrates such as alanine, phenylalanine, glutamine and pipecolic acid. Mediates the saturable, pH-sensitive and electrogenic cotransport of proline and sodium ions with a stoichiometry of 1:1. May have a role as transporter for neurotransmitter precursors into neurons. In contrast to other members of the neurotransmitter transporter family, does not appear to be chloride-dependent. The sequence is that of Sodium-dependent neutral amino acid transporter B(0)AT2 (SLC6A15) from Bos taurus (Bovine).